The following is a 363-amino-acid chain: Early boundary activity protein 1 (363 aa).

The segment covering 155–168 has biased composition (basic and acidic residues); it reads MDQEPEHKQSHEQD. The segment at 155 to 242 is disordered; sequence MDQEPEHKQS…NAKRRCPGFE (88 aa). Over residues 198-209 the composition is skewed to acidic residues; that stretch reads EDLGLDDDDEDY. The BEN domain occupies 255–354; that stretch reads GPNGTEVSRI…TKCADENKML (100 aa).

The heterotrimeric Elba complex consists of Elba1, Elba2 and Elba3.

It localises to the nucleus. In terms of biological role, the heterotrimeric Elba complex is required for chromatin domain boundary function during early embryogenesis. It binds to a 8-bp sequence 5'-CCAATAAG-3' in the Fab-7 insulator or boundary element in the bithorax complex and contributes to its insulator or boundary activity. Elba1 may act as a transcriptional repressor and binds the palindromic sequence 5'-CCAATTGG-3' to mediate transcriptional repression. This is Early boundary activity protein 1 from Drosophila melanogaster (Fruit fly).